Reading from the N-terminus, the 245-residue chain is OVARIAN TUMOR DOMAIN-containing deubiquitinating enzyme 11 (245 aa).

A disordered region spans residues 1-37; sequence MDENHRNPFANASTSARASGSTSASSNSSFSSSVADT. The span at 10-35 shows a compositional bias: low complexity; sequence ANASTSARASGSTSASSNSSFSSSVA. An OTU domain is found at 101–225; the sequence is LAELQMEGDG…EVHYNSLYAN (125 aa). D109 is a catalytic residue. C112 serves as the catalytic Nucleophile. Residue H218 is part of the active site.

The protein belongs to the peptidase C85 family.

The catalysed reaction is Thiol-dependent hydrolysis of ester, thioester, amide, peptide and isopeptide bonds formed by the C-terminal Gly of ubiquitin (a 76-residue protein attached to proteins as an intracellular targeting signal).. Functionally, hydrolase that can remove conjugated ubiquitin from proteins in vitro and may therefore play an important regulatory role at the level of protein turnover by preventing degradation. Inactive cysteine protease. This is OVARIAN TUMOR DOMAIN-containing deubiquitinating enzyme 11 from Arabidopsis thaliana (Mouse-ear cress).